Reading from the N-terminus, the 1248-residue chain is Reverse gyrase 1 (1248 aa).

An RG N-terminal-type zinc finger spans residues 7–44 (IPPSIYLFSCPNCGRSISTYRLLLGSVCNICLEEDKEY). The Zn(2+) site is built by Cys-16, Cys-19, Cys-34, and Cys-37. ATP is bound by residues Gln-92 and 109 to 116 (APPGLGKT). Residues 96 to 262 (IYRLLSGESF…KKYRENTQKN (167 aa)) enclose the Helicase ATP-binding domain. A DEAD box motif is present at residues 219–222 (DDVD). The topoisomerase I stretch occupies residues 621–1248 (QKVKTVLLVV…QVYEEINEIR (628 aa)). Residues 625–789 (TVLLVVESPN…NIRRAEFHEV (165 aa)) enclose the Toprim domain. Glu-631 contributes to the Mg(2+) binding site. Residues 706–735 (IKKCENNHQFTDFFESNKCPRCMTTKVRYD) form an RG C-terminal-type; atypical zinc finger. 4 residues coordinate Zn(2+): Cys-709, His-713, Cys-724, and Cys-727. Position 758 (Asp-758) interacts with Mg(2+). The region spanning 805-1248 (NVNLVKSQLV…QVYEEINEIR (444 aa)) is the Topo IA-type catalytic domain. Residue Tyr-965 is the O-(5'-phospho-DNA)-tyrosine intermediate of the active site.

This sequence in the N-terminal section; belongs to the DEAD box helicase family. DDVD subfamily. It in the C-terminal section; belongs to the type IA topoisomerase family. Monomer. It depends on Zn(2+) as a cofactor. Mg(2+) is required as a cofactor. Post-translationally, the N-terminus is blocked.

Its subcellular location is the cytoplasm. It carries out the reaction ATP + H2O = ADP + phosphate + H(+). Functionally, modifies the topological state of DNA by introducing positive supercoils in an ATP-dependent process. Increases the linking number in steps of +1. Has a DNA-stimulated ATPase activity; closed circular ssDNA stimulates ATPase much better than dsDNA although negative supercoiled, positive supercoiled and relaxed dsDNA all stimulate ATPase activity. All NTPs permit topoisomerization (relaxation) of negatively supercoiled dsDNA without nucleotide hydrolysis. It transiently cleaves a single DNA strand and remains covalently bound to the 5' DNA end. Acts via a tyrosine residue. Reverse gyrase binds and unwinds DNA independently of ATP binding and DNA cleavage. May be involved in rewinding the DNA strands in the regions of the chromosome that have opened up to allow transcription or replication, probably acts via ssDNA regions of the chromosome. In Sulfolobus acidocaldarius (strain ATCC 33909 / DSM 639 / JCM 8929 / NBRC 15157 / NCIMB 11770), this protein is Reverse gyrase 1.